The chain runs to 535 residues: Probable deoxycholate-binding periplasmic protein YgiS (535 aa).

The N-terminal stretch at 1 to 20 (MYTRNLLWLVSLVSAAPLYA) is a signal peptide.

This sequence belongs to the bacterial solute-binding protein 5 family.

The protein resides in the periplasm. In terms of biological role, probably part of a deoxycholate transport system. Its expression in the presence of deoxycholate in a ygiS deletion mutant increases intracellular deoxycholate levels and decreases cell growth; higher expression in the presence of deoxycholate inhibits cell growth completely. Bile acid detergents such as deoxycholate are important for host defense against bacterial growth in the gall bladder and duodenum. The polypeptide is Probable deoxycholate-binding periplasmic protein YgiS (ygiS) (Escherichia coli (strain K12)).